Consider the following 480-residue polypeptide: Islet cell autoantigen 1 (480 aa).

Positions 50-253 (ASDADLDAKL…TSHTMAAIHE (204 aa)) constitute an AH domain. 2 stretches are compositionally biased toward basic and acidic residues: residues 276-293 (LVEKEKKKSSRRENREAV) and 306-321 (ENQHKESSTCQKEEGK). Disordered stretches follow at residues 276–338 (LVEK…ACSG) and 400–421 (LKEPAPMGAQGEPDPKPQIGSA).

It localises to the cytoplasm. It is found in the cytosol. Its subcellular location is the golgi apparatus membrane. The protein resides in the cytoplasmic vesicle. The protein localises to the secretory vesicle membrane. It localises to the secretory vesicle. It is found in the synaptic vesicle membrane. Functionally, may play a role in neurotransmitter secretion. In Rattus norvegicus (Rat), this protein is Islet cell autoantigen 1.